A 256-amino-acid chain; its full sequence is Acetoacetate decarboxylase 3 (256 aa).

The Schiff-base intermediate with acetoacetate role is filled by Lys-110.

This sequence belongs to the ADC family.

The catalysed reaction is acetoacetate + H(+) = acetone + CO2. In terms of biological role, catalyzes the conversion of acetoacetate to acetone and carbon dioxide. This Mesorhizobium japonicum (strain LMG 29417 / CECT 9101 / MAFF 303099) (Mesorhizobium loti (strain MAFF 303099)) protein is Acetoacetate decarboxylase 3.